The following is a 332-amino-acid chain: PRKC apoptosis WT1 regulator protein (332 aa).

Composition is skewed to polar residues over residues 1-14 (MATGGYRSSGSTTD) and 52-62 (AQTTAAGTSEL). The disordered stretch occupies residues 1–253 (MATGGYRSSG…HNRDTSAPAN (253 aa)). The B30.2/SPRY domain-binding motif signature appears at 61 to 65 (ELNHG). A compositionally biased stretch (low complexity) spans 65-79 (GPAGAAAPAAPGPGA). Positions 137 to 153 (RKGKGQIEKRKLREKRR) match the Nuclear localization signal motif. Positions 137–195 (RKGKGQIEKRKLREKRRSTGVVNIPAAECLDEYEDDEAGQKERKREDAITQQNTIQNEA) are selective for apoptosis induction in cancer cells (SAC). A Phosphothreonine; by PKA modification is found at threonine 155. Residues 174–184 (AGQKERKREDA) are compositionally biased toward basic and acidic residues. A coiled-coil region spans residues 176–198 (QKERKREDAITQQNTIQNEAASL). A compositionally biased stretch (polar residues) spans 185–195 (ITQQNTIQNEA). Serine 223 bears the Phosphoserine mark. Over residues 234–247 (PRTDRSGFSRHNRD) the composition is skewed to basic and acidic residues. The segment at 292–332 (IGKLKEEIDLLNRDLDDMEDENEQLKQENKTLLKVVGQLTR) is leucine-zipper.

In terms of assembly, homooligomer. Interacts (via the C-terminal region) with WT1. Interacts with THAP1. Interacts with AATF. Interacts with BACE1. Interacts with SPSB1 (via B30.2/SPRY domain); this interaction is direct and occurs in association with the Elongin BC complex. Interacts with SPSB2 (via B30.2/SPRY domain); this interaction occurs in association with the Elongin BC complex. Interacts with SPSB4 (via B30.2/SPRY domain); this interaction occurs in association with the Elongin BC complex. Component of a ternary complex composed of SQSTM1 and PRKCZ. Interacts with actin. Preferentially phosphorylated at the Thr-155 by PKC in cancer cells.

It localises to the cytoplasm. Its subcellular location is the nucleus. Pro-apoptotic protein capable of selectively inducing apoptosis in cancer cells, sensitizing the cells to diverse apoptotic stimuli and causing regression of tumors in animal models. Induces apoptosis in certain cancer cells by activation of the Fas prodeath pathway and coparallel inhibition of NF-kappa-B transcriptional activity. Inhibits the transcriptional activation and augments the transcriptional repression mediated by WT1. Down-regulates the anti-apoptotic protein BCL2 via its interaction with WT1. Also seems to be a transcriptional repressor by itself. May be directly involved in regulating the amyloid precursor protein (APP) cleavage activity of BACE1. The sequence is that of PRKC apoptosis WT1 regulator protein (Pawr) from Rattus norvegicus (Rat).